The chain runs to 683 residues: DNA ligase (683 aa).

NAD(+) contacts are provided by residues 44–48 (DAEYD), 93–94 (SL), and Glu127. Catalysis depends on Lys129, which acts as the N6-AMP-lysine intermediate. NAD(+) contacts are provided by Arg150, Glu187, Lys302, and Lys326. Residues Cys420, Cys423, Cys438, and Cys444 each coordinate Zn(2+). In terms of domain architecture, BRCT spans 601–683 (RVGGRLAGLT…SKLLATGGNQ (83 aa)).

It belongs to the NAD-dependent DNA ligase family. LigA subfamily. The cofactor is Mg(2+). Mn(2+) serves as cofactor.

The enzyme catalyses NAD(+) + (deoxyribonucleotide)n-3'-hydroxyl + 5'-phospho-(deoxyribonucleotide)m = (deoxyribonucleotide)n+m + AMP + beta-nicotinamide D-nucleotide.. Its function is as follows. DNA ligase that catalyzes the formation of phosphodiester linkages between 5'-phosphoryl and 3'-hydroxyl groups in double-stranded DNA using NAD as a coenzyme and as the energy source for the reaction. It is essential for DNA replication and repair of damaged DNA. This Trichlorobacter lovleyi (strain ATCC BAA-1151 / DSM 17278 / SZ) (Geobacter lovleyi) protein is DNA ligase.